A 908-amino-acid polypeptide reads, in one-letter code: Protein translocase subunit SecA (908 aa).

Residues Gln-87, Gly-105–Thr-109, and Asp-512 contribute to the ATP site. The segment at Gly-865–Ser-908 is disordered. Positions Met-879–Arg-888 are enriched in basic and acidic residues. Zn(2+) contacts are provided by Cys-892, Cys-894, Cys-903, and His-904. Basic residues predominate over residues Arg-898–Ser-908.

It belongs to the SecA family. Monomer and homodimer. Part of the essential Sec protein translocation apparatus which comprises SecA, SecYEG and auxiliary proteins SecDF-YajC and YidC. Requires Zn(2+) as cofactor.

It localises to the cell inner membrane. It is found in the cytoplasm. It carries out the reaction ATP + H2O + cellular proteinSide 1 = ADP + phosphate + cellular proteinSide 2.. Functionally, part of the Sec protein translocase complex. Interacts with the SecYEG preprotein conducting channel. Has a central role in coupling the hydrolysis of ATP to the transfer of proteins into and across the cell membrane, serving both as a receptor for the preprotein-SecB complex and as an ATP-driven molecular motor driving the stepwise translocation of polypeptide chains across the membrane. This is Protein translocase subunit SecA from Shewanella sp. (strain ANA-3).